A 986-amino-acid polypeptide reads, in one-letter code: Vacuolar membrane protease (986 aa).

Residues Met1–Arg16 are Cytoplasmic-facing. Residues Trp17–Val37 form a helical membrane-spanning segment. At His38 to Thr392 the chain is on the vacuolar side. A glycan (N-linked (GlcNAc...) asparagine) is linked at Asn121. Zn(2+) contacts are provided by His176 and Asp188. The Proton acceptor role is filled by Glu222. Zn(2+) is bound by residues Glu223, Glu248, and His321. A helical transmembrane segment spans residues Leu393–Ile413. The Cytoplasmic portion of the chain corresponds to Ala414 to Gly444. Residues Phe445–Leu465 form a helical membrane-spanning segment. Residues Val466 to His475 lie on the Vacuolar side of the membrane. The chain crosses the membrane as a helical span at residues Ser476–Val496. Over Ser497–Arg510 the chain is Cytoplasmic. The helical transmembrane segment at Ile511–Tyr531 threads the bilayer. Topologically, residues Gln532–Arg535 are vacuolar. A helical membrane pass occupies residues Gly536–Ile556. Topologically, residues Ser557–Thr668 are cytoplasmic. The span at Gln573–Gly585 shows a compositional bias: polar residues. The interval Gln573 to Gly622 is disordered. Residues Asp596 to Pro613 are compositionally biased toward acidic residues. A helical membrane pass occupies residues Leu669–Leu689. Residues Thr690–Leu704 lie on the Vacuolar side of the membrane. The chain crosses the membrane as a helical span at residues Phe705–Ile725. Topologically, residues His726–Leu732 are cytoplasmic. Residues Pro733–Phe753 traverse the membrane as a helical segment. Over Ser754 to Ile986 the chain is Vacuolar. N-linked (GlcNAc...) asparagine glycosylation is found at Asn799, Asn840, and Asn948. The interval Asn840–Ile859 is disordered.

The protein belongs to the peptidase M28 family. Zn(2+) serves as cofactor.

The protein resides in the vacuole membrane. Its function is as follows. May be involved in vacuolar sorting and osmoregulation. This chain is Vacuolar membrane protease, found in Aspergillus niger (strain ATCC MYA-4892 / CBS 513.88 / FGSC A1513).